The following is a 40-amino-acid chain: Photosystem II reaction center protein L (40 aa).

Residues 19–39 form a helical membrane-spanning segment; the sequence is SLYWGLLLIFVLAVLFSNYFF.

The protein belongs to the PsbL family. As to quaternary structure, PSII is composed of 1 copy each of membrane proteins PsbA, PsbB, PsbC, PsbD, PsbE, PsbF, PsbH, PsbI, PsbJ, PsbK, PsbL, PsbM, PsbT, PsbX, PsbY, PsbZ, Psb30/Ycf12, at least 3 peripheral proteins of the oxygen-evolving complex and a large number of cofactors. It forms dimeric complexes.

The protein localises to the plastid. Its subcellular location is the chloroplast thylakoid membrane. One of the components of the core complex of photosystem II (PSII). PSII is a light-driven water:plastoquinone oxidoreductase that uses light energy to abstract electrons from H(2)O, generating O(2) and a proton gradient subsequently used for ATP formation. It consists of a core antenna complex that captures photons, and an electron transfer chain that converts photonic excitation into a charge separation. This subunit is found at the monomer-monomer interface and is required for correct PSII assembly and/or dimerization. The chain is Photosystem II reaction center protein L from Nandina domestica (Heavenly bamboo).